We begin with the raw amino-acid sequence, 204 residues long: Outer-membrane lipoprotein carrier protein (204 aa).

The first 21 residues, 1–21, serve as a signal peptide directing secretion; sequence MKKYLNLTALLLVGISNVTWA.

The protein belongs to the LolA family. In terms of assembly, monomer.

The protein resides in the periplasm. Functionally, participates in the translocation of lipoproteins from the inner membrane to the outer membrane. Only forms a complex with a lipoprotein if the residue after the N-terminal Cys is not an aspartate (The Asp acts as a targeting signal to indicate that the lipoprotein should stay in the inner membrane). This chain is Outer-membrane lipoprotein carrier protein, found in Histophilus somni (strain 2336) (Haemophilus somnus).